Here is a 268-residue protein sequence, read N- to C-terminus: MSSRWNRTIYVGNLPGDIRKCEVEDLFYKYGPIVDIDLKIPPRPPGYAFVEFEDPRDADDAIYGRDGYDFDGCRLRVEIAHGGRRFSPSVDRYSSSYSASRAPSRRSDYRVLVTGLPPSASWQDLKDHMRKAGDVCFSEVFPDRKGMSGVVDYSNYDDMKYAIRKLDATEFRNAFSSAYIRVREYESRSVSRSPDDSKSYRSRSRSRGPSCSYSSKSRSVSPARSISPRSRPLSRSRSLYSSVSRSQSRSKSRSRSRSNSPVSPVISG.

RRM domains are found at residues 7–82 (RTIY…IAHG) and 109–187 (YRVL…EYES). The span at 186–199 (ESRSVSRSPDDSKS) shows a compositional bias: basic and acidic residues. Residues 186 to 268 (ESRSVSRSPD…NSPVSPVISG (83 aa)) form a disordered region. Ser193, Ser210, Ser212, Ser214, Ser219, Ser221, Ser227, Ser236, Ser246, Ser256, and Ser260 each carry phosphoserine. The span at 207 to 247 (RGPSCSYSSKSRSVSPARSISPRSRPLSRSRSLYSSVSRSQ) shows a compositional bias: low complexity. A compositionally biased stretch (low complexity) spans 257 to 268 (RSNSPVSPVISG).

Belongs to the splicing factor SR family. SR subfamily. As to quaternary structure, component of the spliceosome. Interacts with SNRNP35, CYP59 and CYP63. In terms of processing, phosphorylated. As to expression, ubiquitous.

Its subcellular location is the nucleus speckle. The protein resides in the nucleus. The protein localises to the nucleoplasm. It is found in the cytoplasm. Regulatory splicing factor that modulates alternative splicing and gene expression in specific cell types. Autoregulates its own expression. Probably involved in intron recognition and spliceosome assembly. The sequence is that of Serine/arginine-rich splicing factor SR30 (SR30) from Arabidopsis thaliana (Mouse-ear cress).